A 146-amino-acid chain; its full sequence is D-aminoacyl-tRNA deacylase (146 aa).

Residues 137–138 (GP) carry the Gly-cisPro motif, important for rejection of L-amino acids motif.

The protein belongs to the DTD family. In terms of assembly, homodimer.

The protein resides in the cytoplasm. It carries out the reaction glycyl-tRNA(Ala) + H2O = tRNA(Ala) + glycine + H(+). The enzyme catalyses a D-aminoacyl-tRNA + H2O = a tRNA + a D-alpha-amino acid + H(+). An aminoacyl-tRNA editing enzyme that deacylates mischarged D-aminoacyl-tRNAs. Also deacylates mischarged glycyl-tRNA(Ala), protecting cells against glycine mischarging by AlaRS. Acts via tRNA-based rather than protein-based catalysis; rejects L-amino acids rather than detecting D-amino acids in the active site. By recycling D-aminoacyl-tRNA to D-amino acids and free tRNA molecules, this enzyme counteracts the toxicity associated with the formation of D-aminoacyl-tRNA entities in vivo and helps enforce protein L-homochirality. The chain is D-aminoacyl-tRNA deacylase from Bacillus cytotoxicus (strain DSM 22905 / CIP 110041 / 391-98 / NVH 391-98).